Here is a 217-residue protein sequence, read N- to C-terminus: Ribosomal RNA small subunit methyltransferase G (217 aa).

Residues Gly85, Leu90, 135 to 136 (IE), and Arg149 contribute to the S-adenosyl-L-methionine site.

The protein belongs to the methyltransferase superfamily. RNA methyltransferase RsmG family.

The protein resides in the cytoplasm. It carries out the reaction guanosine(527) in 16S rRNA + S-adenosyl-L-methionine = N(7)-methylguanosine(527) in 16S rRNA + S-adenosyl-L-homocysteine. Specifically methylates the N7 position of guanine in position 527 of 16S rRNA. This is Ribosomal RNA small subunit methyltransferase G from Acidiphilium cryptum (strain JF-5).